Reading from the N-terminus, the 555-residue chain is MEAEKRLFLKALKEKFEEDPKEKFTKFYTYGGWQQSARKQEFVSENEKIVAEKRGGIPMYNPDIGVPLGQRKLMPYKISNTDTYVEGDDLHFMNNAAIQQLWDDIRRTVIVGMDTAHMVLEKRLGVEVTPETINEYMHTINHSLPGGAAVVQEHMVEVHPSLAWDCYAKIFTGDDELADELDDRFVIDINKLFPEEQAEASKAAIGKKTYQVSRVPSLVGRVCDGGTISRWSAMQIGMSFITAYKLCAGEAAIADFSYAAKHADVIQMGNALLGRRARGPNELGGVRFGILSDVVQTTRVSDDPVEQSLEVVATGAALYDQIWLGSYMSGGVGFTQYATASYTDDILDDFSYYGYEYVEKKYGRCGTKATMDVVEDIASEVTLYALEQYDEYPALLEDHFGGSQRAAVAAAAAGISVCMATGNSNAGVNGWYLSQILHKEYHSRLGFYGYDLQDQCGASNSLAIRNDEASPLELRGPNYPNYAMNVGHQGEYAGIAQSAHSARGDAFATNALIKVAFADPSLVFDFSKPRKEIARGALREFEAAGERDPILPAKI.

A coenzyme F430-binding site is contributed by Q152. Coenzyme B-binding positions include R230, K261–H262, and R275. Residues Y337 and Y448 each coordinate coenzyme M.

The protein belongs to the methyl-coenzyme M reductase alpha subunit family. In terms of assembly, MCR is a hexamer of two alpha, two beta, and two gamma chains, forming a dimer of heterotrimers. The cofactor is coenzyme F430.

The protein localises to the cytoplasm. The catalysed reaction is coenzyme B + methyl-coenzyme M = methane + coenzyme M-coenzyme B heterodisulfide. Its pathway is one-carbon metabolism; methyl-coenzyme M reduction; methane from methyl-coenzyme M: step 1/1. Component of the methyl-coenzyme M reductase (MCR) I that catalyzes the reductive cleavage of methyl-coenzyme M (CoM-S-CH3 or 2-(methylthio)ethanesulfonate) using coenzyme B (CoB or 7-mercaptoheptanoylthreonine phosphate) as reductant which results in the production of methane and the mixed heterodisulfide of CoB and CoM (CoM-S-S-CoB). This is the final step in methanogenesis. This chain is Methyl-coenzyme M reductase subunit alpha (mcrA), found in Methanococcus voltae.